Consider the following 108-residue polypeptide: Glutaredoxin-like protein YDR286C homolog (108 aa).

A disulfide bridge links C22 with C25.

The protein belongs to the glutaredoxin family. YDR286C subfamily.

The chain is Glutaredoxin-like protein YDR286C homolog from Dictyostelium discoideum (Social amoeba).